The primary structure comprises 154 residues: Endoribonuclease YbeY (154 aa).

Zn(2+) is bound by residues His-114, His-118, and His-124.

The protein belongs to the endoribonuclease YbeY family. Zn(2+) serves as cofactor.

The protein localises to the cytoplasm. Single strand-specific metallo-endoribonuclease involved in late-stage 70S ribosome quality control and in maturation of the 3' terminus of the 16S rRNA. The protein is Endoribonuclease YbeY of Haemophilus influenzae (strain ATCC 51907 / DSM 11121 / KW20 / Rd).